We begin with the raw amino-acid sequence, 427 residues long: Imidazolonepropionase (427 aa).

Residues His-96 and His-98 each coordinate Fe(3+). Zn(2+)-binding residues include His-96 and His-98. Arg-105, Tyr-168, and His-201 together coordinate 4-imidazolone-5-propanoate. Tyr-168 is an N-formimidoyl-L-glutamate binding site. Residue His-265 coordinates Fe(3+). Zn(2+) is bound at residue His-265. Gln-268 contributes to the 4-imidazolone-5-propanoate binding site. Asp-340 is a Fe(3+) binding site. Asp-340 serves as a coordination point for Zn(2+). 2 residues coordinate N-formimidoyl-L-glutamate: Asn-342 and Gly-344. Thr-345 contacts 4-imidazolone-5-propanoate.

This sequence belongs to the metallo-dependent hydrolases superfamily. HutI family. Requires Zn(2+) as cofactor. Fe(3+) is required as a cofactor.

The protein resides in the cytoplasm. The enzyme catalyses 4-imidazolone-5-propanoate + H2O = N-formimidoyl-L-glutamate. It functions in the pathway amino-acid degradation; L-histidine degradation into L-glutamate; N-formimidoyl-L-glutamate from L-histidine: step 3/3. Catalyzes the hydrolytic cleavage of the carbon-nitrogen bond in imidazolone-5-propanoate to yield N-formimidoyl-L-glutamate. It is the third step in the universal histidine degradation pathway. This is Imidazolonepropionase from Psychrobacter cryohalolentis (strain ATCC BAA-1226 / DSM 17306 / VKM B-2378 / K5).